A 312-amino-acid chain; its full sequence is Short chain dehydrogenase pgmD (312 aa).

The NADP(+) site is built by Val46, Ile47, Lys171, Tyr207, Lys211, and Thr242. Tyr207 (proton donor) is an active-site residue. The active-site Lowers pKa of active site Tyr is Lys211.

It belongs to the short-chain dehydrogenases/reductases (SDR) family.

Its pathway is pigment biosynthesis. It functions in the pathway secondary metabolite biosynthesis. In terms of biological role, short chain dehydrogenase; part of the gene cluster that mediates the biosynthesis of pleosporalin A, ascomycone A, as well as a third cryptic naphthoquinone derived pigment, all responsible for the coloration of conidia. Essential for the production of pleosporalin A, but not the 2 other final products. The pathway begins with the biosynthesis of the cyclized heptaketide 3-acetonyl-1,6,8-trihydroxy-2-naphthaldehyde by the NR-PKS pgmA. The C-6 hydroxyl group is further methylated by the O-methyltransferase pgmB to yield fusarubinaldehyde which is in turn oxidized by the cytochrome P450 monooxygenase pgmC at C-9. The C-1 hydroxyl group is then methylated spontaneously. Although pgmE, pgmD and pgmH are essential for the production of pleosporalin A, it is not the case for the 2 other final products and it remains difficult to assign a specific function to each enzyme. PgmF and pgmG seem not to be involved in pigment biosynthesis although they were regulated by the cluster-specific transcription factor pgmR. This is Short chain dehydrogenase pgmD from Aspergillus terreus.